The sequence spans 236 residues: MPPKLKATRKSVSFQHLSDEDISKSQYILKTEFPRIETSTLTIPFHSALLIFGLYKFGLTNDIYGVMLKGIFSLIPLQLLYGYLITTRSEKEKKTKSHNNSENVPLLLAGGIVISLVLSVPLFVALILLGAPLASHLKETYLLSIHLSLLIFYPSLVLYKYDYKSLVKFLDADGVYNAIAKNQILLSAVLAVIGTWFGVIPIPLDWDRDWQQWPITLLTGAYIGSFVGGIACFLFQ.

A run of 2 helical transmembrane segments spans residues 40–60 (TLTI…FGLT) and 65–85 (GVML…GYLI). An N-linked (GlcNAc...) asparagine glycan is attached at Asn99. The next 4 membrane-spanning stretches (helical) occupy residues 107–127 (LLAG…VALI), 139–159 (ETYL…LVLY), 184–204 (ILLS…PIPL), and 215–235 (ITLL…CFLF).

It belongs to the PIGF family.

It localises to the endoplasmic reticulum membrane. The protein operates within glycolipid biosynthesis; glycosylphosphatidylinositol-anchor biosynthesis. Functionally, acts in the GPI biosynthetic pathway between GlcNAc-PI synthesis and GPI transfer to protein. The chain is Glycosylphosphatidylinositol anchor biosynthesis protein 11 (GPI11) from Debaryomyces hansenii (strain ATCC 36239 / CBS 767 / BCRC 21394 / JCM 1990 / NBRC 0083 / IGC 2968) (Yeast).